We begin with the raw amino-acid sequence, 541 residues long: Chaperonin GroEL 2 (541 aa).

ATP contacts are provided by residues 30 to 33 (TLGP), Lys51, 87 to 91 (DGTTT), Gly415, and Asp496.

This sequence belongs to the chaperonin (HSP60) family. As to quaternary structure, forms a cylinder of 14 subunits composed of two heptameric rings stacked back-to-back. Interacts with the co-chaperonin GroES.

The protein localises to the cytoplasm. It carries out the reaction ATP + H2O + a folded polypeptide = ADP + phosphate + an unfolded polypeptide.. Together with its co-chaperonin GroES, plays an essential role in assisting protein folding. The GroEL-GroES system forms a nano-cage that allows encapsulation of the non-native substrate proteins and provides a physical environment optimized to promote and accelerate protein folding. The protein is Chaperonin GroEL 2 of Gluconacetobacter diazotrophicus (strain ATCC 49037 / DSM 5601 / CCUG 37298 / CIP 103539 / LMG 7603 / PAl5).